The chain runs to 179 residues: Methylated-DNA--protein-cysteine methyltransferase (179 aa).

The active-site Nucleophile; methyl group acceptor is the Cys130.

The protein belongs to the MGMT family.

The protein resides in the cytoplasm. The catalysed reaction is a 6-O-methyl-2'-deoxyguanosine in DNA + L-cysteinyl-[protein] = S-methyl-L-cysteinyl-[protein] + a 2'-deoxyguanosine in DNA. It carries out the reaction a 4-O-methyl-thymidine in DNA + L-cysteinyl-[protein] = a thymidine in DNA + S-methyl-L-cysteinyl-[protein]. In terms of biological role, involved in the cellular defense against the biological effects of O6-methylguanine (O6-MeG) and O4-methylthymine (O4-MeT) in DNA. Repairs the methylated nucleobase in DNA by stoichiometrically transferring the methyl group to a cysteine residue in the enzyme. This is a suicide reaction: the enzyme is irreversibly inactivated. The chain is Methylated-DNA--protein-cysteine methyltransferase from Haemophilus influenzae (strain ATCC 51907 / DSM 11121 / KW20 / Rd).